Reading from the N-terminus, the 492-residue chain is MANYFNTLNLRQKLDQLGRCRFMDREEFADEANFLKGKKIVIVGCGAQGLNQGLNMRDSGLDISYALRPEAIAEKRASFQRATENGFKVGTYEELIPTADLVVNLTPDKQHSKVVADVMPLMKKDSAFGYSHGFNIVEVGEEIRKDITVVMVAPKCPGTEVREEYKRGFGVPTLIAVHPENDPKGEGLAIAKAWAAATGGHKAGVLESSFVAEVKSDLMGEQTILCGMLQAGSIVCYDKLVADGKDPAYAGKLIQYGWETITEALKQGGITLMMDRLSNSAKLRAFELAEQIKESLGFLYYKHMDDIISGHFSATMMADWANGDKDLFAWREATGKTAFENAPKYDGKISEQEYFDNGVLMIAMVKAGVELAFDAMVASGIYEESAYYESLHELPLIANTIARKRLYEMNVVISDTAEYGNYLFSNVATPILAKEIIPNLQKGDLGEPTPAVEIDNITLRDVNDAIRNHPVELIGQELRGYMTDMKRIAVAG.

One can recognise a KARI N-terminal Rossmann domain in the interval 14 to 208; it reads LDQLGRCRFM…GGHKAGVLES (195 aa). NADP(+) is bound by residues 45–48, Arg68, Arg76, Ser78, and 108–110; these read CGAQ and DKQ. Residue His132 is part of the active site. Gly158 contributes to the NADP(+) binding site. 2 consecutive KARI C-terminal knotted domains span residues 209-344 and 345-485; these read SFVA…NAPK and YDGK…MTDM. Mg(2+) contacts are provided by Asp217, Glu221, Glu389, and Glu393. Ser414 contributes to the substrate binding site.

The protein belongs to the ketol-acid reductoisomerase family. Requires Mg(2+) as cofactor.

The enzyme catalyses (2R)-2,3-dihydroxy-3-methylbutanoate + NADP(+) = (2S)-2-acetolactate + NADPH + H(+). It carries out the reaction (2R,3R)-2,3-dihydroxy-3-methylpentanoate + NADP(+) = (S)-2-ethyl-2-hydroxy-3-oxobutanoate + NADPH + H(+). It participates in amino-acid biosynthesis; L-isoleucine biosynthesis; L-isoleucine from 2-oxobutanoate: step 2/4. The protein operates within amino-acid biosynthesis; L-valine biosynthesis; L-valine from pyruvate: step 2/4. Involved in the biosynthesis of branched-chain amino acids (BCAA). Catalyzes an alkyl-migration followed by a ketol-acid reduction of (S)-2-acetolactate (S2AL) to yield (R)-2,3-dihydroxy-isovalerate. In the isomerase reaction, S2AL is rearranged via a Mg-dependent methyl migration to produce 3-hydroxy-3-methyl-2-ketobutyrate (HMKB). In the reductase reaction, this 2-ketoacid undergoes a metal-dependent reduction by NADPH to yield (R)-2,3-dihydroxy-isovalerate. This Haemophilus influenzae (strain 86-028NP) protein is Ketol-acid reductoisomerase (NADP(+)).